A 347-amino-acid chain; its full sequence is Transcription factor JunD (347 aa).

Residues 1-43 are disordered; sequence METPFYGDEALSGLGGGASGSGGSFASPGRLFPGAPPTAAAGS. Over residues 13 to 23 the composition is skewed to gly residues; sequence GLGGGASGSGG. A Menin-binding motif (MBM) motif is present at residues 27–39; the sequence is SPGRLFPGAPPTA. Positions 46–55 match the MAP kinase docking motif; essential for its phosphorylation motif; the sequence is KKDALTLSLS. Residues 62–86 form a disordered region; sequence LKPAAAPPPTPLRADGAPSAAPPDG. Positions 73-86 are enriched in low complexity; it reads LRADGAPSAAPPDG. Position 90 is a phosphoserine (Ser-90). Ser-100 bears the Phosphoserine; by MAPK8 mark. Thr-117 carries the phosphothreonine modification. A disordered region spans residues 244–264; sequence QTVPDVPSFGESPPLSPIDMD. 3 positions are modified to phosphoserine: Ser-251, Ser-255, and Ser-259. Residues 268–295 form a basic motif region; that stretch reads RIKAERKRLRNRIAASKCRKRKLERISR. Residues 268–331 enclose the bZIP domain; it reads RIKAERKRLR…AQLKQKVLSH (64 aa). A leucine-zipper region spans residues 296–324; sequence LEEKVKTLKSQNTELASTASLLREQVAQL.

It belongs to the bZIP family. Jun subfamily. As to quaternary structure, heterodimer; binds DNA as a heterodimer. Component of an AP-1 transcription factor complex composed of JUN-FOS heterodimers. As part of the AP-1 transcription factor complex, forms heterodimers with FOS proteins, thereby binding to the AP-1 consensus sequence and stimulating transcription. Forms heterodimers with FOSB; thereby binding to the AP-1 consensus sequence. Interacts (via MBM motif) with MEN1; this interaction represses transcriptional activation. Interacts with MAPK10; this interaction is inhibited in the presence of MEN1. In terms of processing, phosphorylated by MAP kinases MAPK8 and MAPK10; phosphorylation is inhibited in the presence of MEN1.

The protein localises to the nucleus. Its function is as follows. Transcription factor binding AP-1 sites. Heterodimerizes with proteins of the FOS family to form an AP-1 transcription factor complex, thereby enhancing their DNA binding activity to an AP-1 consensus sequence 3'-TGA[GC]TCA-5' and enhancing their transcriptional activity. The protein is Transcription factor JunD (JUND) of Homo sapiens (Human).